Here is a 294-residue protein sequence, read N- to C-terminus: Protease HtpX homolog 2 (294 aa).

Helical transmembrane passes span 15–35 (MLFTMFLLAAVYLFFLAFLSY) and 37–57 (GTPPVFMLLFVGAFMGIQYFY). His-140 provides a ligand contact to Zn(2+). Residue Glu-141 is part of the active site. Residue His-144 participates in Zn(2+) binding. 2 consecutive transmembrane segments (helical) span residues 151–171 (AVLTIASFISTIAFYIVRYSL) and 185–205 (GGILLVWLVSIAVWVVSFLLI). Position 213 (Glu-213) interacts with Zn(2+).

This sequence belongs to the peptidase M48B family. It depends on Zn(2+) as a cofactor.

It is found in the cell membrane. This is Protease HtpX homolog 2 from Methanosarcina acetivorans (strain ATCC 35395 / DSM 2834 / JCM 12185 / C2A).